Here is a 337-residue protein sequence, read N- to C-terminus: Transcription factor bHLH121 (337 aa).

The bHLH domain maps to 58 to 108; the sequence is ARKSQKAGREKLRREKLNEHFVELGNVLDPERPKNDKATILTDTVQLLKEL. Positions 235-337 are disordered; that stretch reads VHIPQNPGNR…AGGQKPDDAK (103 aa). Basic and acidic residues-rich tracts occupy residues 244–263 and 280–291; these read RSRE…KAED and SDKDTLQRPEKT. Residues 297–317 show a composition bias toward low complexity; that stretch reads NNNNNSIEESSHSSKCSSSPS.

As to quaternary structure, homodimer. In terms of tissue distribution, expressed constitutively in roots, leaves, stems, and flowers.

Its subcellular location is the nucleus. The sequence is that of Transcription factor bHLH121 (BHLH121) from Arabidopsis thaliana (Mouse-ear cress).